The primary structure comprises 532 residues: Protein DETOXIFICATION 48 (532 aa).

12 consecutive transmembrane segments (helical) span residues 65 to 85, 95 to 115, 136 to 156, 174 to 194, 211 to 231, 235 to 255, 279 to 301, 322 to 342, 363 to 383, 397 to 417, 437 to 457, and 464 to 484; these read ISGP…ISML, LAGG…VISG, LGLT…PISF, ISSV…LLSL, VTYS…LLVV, MGVA…VVLL, GWSA…WWWY, GILI…SLGV, IISL…AVLV, ILQL…GNCP, INLG…GFVF, and LWFG…CALL. A disordered region spans residues 496–532; that stretch reads EELTSQTPGKSPPLLPIASSKSRSTSGTEDMMRTMLV. Polar residues predominate over residues 514–523; sequence SSKSRSTSGT.

This sequence belongs to the multi antimicrobial extrusion (MATE) (TC 2.A.66.1) family. Highly expressed in shoot apices relative to leaves. At vegetative stages, highly expressed at the stipules. At reproductive stages, most highly expressed in the mature pollen. Also expressed in the tips of sepals.

It localises to the golgi apparatus membrane. Its subcellular location is the late endosome membrane. Its function is as follows. Functions as a multidrug and toxin extrusion transporter. Contributes to iron homeostasis during stress responses and senescence. Could be involved in specifying the lateral organ initiation rate. May act as a negative regulator of hypocotyl cell elongation in the light. The sequence is that of Protein DETOXIFICATION 48 from Arabidopsis thaliana (Mouse-ear cress).